Reading from the N-terminus, the 432-residue chain is Adenosylhomocysteinase (432 aa).

S2 carries the N-acetylserine modification. Substrate contacts are provided by T57, D131, and E156. Position 183 is a phosphoserine (S183). The tract at residues 183–350 is NAD binding; it reads SVTKSKFDNL…EGRLVNLGCA (168 aa). Residues K186 and D190 each coordinate substrate. Residue K186 is modified to N6-(2-hydroxyisobutyryl)lysine. A Phosphotyrosine modification is found at Y193.

It belongs to the adenosylhomocysteinase family. In terms of assembly, homotetramer. Interaction with AHCYL1. Requires NAD(+) as cofactor.

It localises to the cytoplasm. It is found in the melanosome. The protein resides in the nucleus. Its subcellular location is the endoplasmic reticulum. It catalyses the reaction S-adenosyl-L-homocysteine + H2O = L-homocysteine + adenosine. Its pathway is amino-acid biosynthesis; L-homocysteine biosynthesis; L-homocysteine from S-adenosyl-L-homocysteine: step 1/1. Its function is as follows. Catalyzes the hydrolysis of S-adenosyl-L-homocysteine to form adenosine and homocysteine. Binds copper ions. In Macaca fascicularis (Crab-eating macaque), this protein is Adenosylhomocysteinase (AHCY).